Here is a 285-residue protein sequence, read N- to C-terminus: Complex I assembly factor TIMMDC1, mitochondrial (285 aa).

Transmembrane regions (helical) follow at residues alanine 80–alanine 100, arginine 137–tyrosine 159, leucine 165–leucine 185, and leucine 188–alanine 208.

Belongs to the Tim17/Tim22/Tim23 family. In terms of assembly, associates with the intermediate 315 kDa subcomplex of incompletely assembled complex I. Interacts with TMEM70.

The protein resides in the mitochondrion membrane. Its function is as follows. Chaperone protein involved in the assembly of the mitochondrial NADH:ubiquinone oxidoreductase complex (complex I). Participates in constructing the membrane arm of complex I. The chain is Complex I assembly factor TIMMDC1, mitochondrial from Rattus norvegicus (Rat).